Consider the following 392-residue polypeptide: Formate-dependent phosphoribosylglycinamide formyltransferase (392 aa).

Residues 15-16 (EL) and E75 each bind N(1)-(5-phospho-beta-D-ribosyl)glycinamide. ATP-binding positions include R107, K148, 153–158 (SSGKGQ), 188–191 (EEFL), and E196. The ATP-grasp domain maps to 112–302 (DLASGELGLH…EFELHLRAVL (191 aa)). Mg(2+) is bound by residues E261 and E273. N(1)-(5-phospho-beta-D-ribosyl)glycinamide-binding positions include D280, K350, and 357–358 (RR).

Belongs to the PurK/PurT family. As to quaternary structure, homodimer.

The enzyme catalyses N(1)-(5-phospho-beta-D-ribosyl)glycinamide + formate + ATP = N(2)-formyl-N(1)-(5-phospho-beta-D-ribosyl)glycinamide + ADP + phosphate + H(+). It functions in the pathway purine metabolism; IMP biosynthesis via de novo pathway; N(2)-formyl-N(1)-(5-phospho-D-ribosyl)glycinamide from N(1)-(5-phospho-D-ribosyl)glycinamide (formate route): step 1/1. Involved in the de novo purine biosynthesis. Catalyzes the transfer of formate to 5-phospho-ribosyl-glycinamide (GAR), producing 5-phospho-ribosyl-N-formylglycinamide (FGAR). Formate is provided by PurU via hydrolysis of 10-formyl-tetrahydrofolate. The chain is Formate-dependent phosphoribosylglycinamide formyltransferase from Synechococcus sp. (strain CC9902).